Here is a 385-residue protein sequence, read N- to C-terminus: 1-deoxy-D-xylulose 5-phosphate reductoisomerase (385 aa).

Thr-10, Gly-11, Ser-12, Ile-13, Lys-37, and Asn-124 together coordinate NADPH. Lys-125 lines the 1-deoxy-D-xylulose 5-phosphate pocket. Position 126 (Glu-126) interacts with NADPH. A Mn(2+)-binding site is contributed by Asp-150. 1-deoxy-D-xylulose 5-phosphate contacts are provided by Ser-151, Glu-152, Ser-176, and His-199. Mn(2+) is bound at residue Glu-152. Gly-205 contributes to the NADPH binding site. Ser-212, Asn-217, Lys-218, and Glu-221 together coordinate 1-deoxy-D-xylulose 5-phosphate. Glu-221 is a Mn(2+) binding site.

It belongs to the DXR family. It depends on Mg(2+) as a cofactor. Requires Mn(2+) as cofactor.

The catalysed reaction is 2-C-methyl-D-erythritol 4-phosphate + NADP(+) = 1-deoxy-D-xylulose 5-phosphate + NADPH + H(+). The protein operates within isoprenoid biosynthesis; isopentenyl diphosphate biosynthesis via DXP pathway; isopentenyl diphosphate from 1-deoxy-D-xylulose 5-phosphate: step 1/6. Its function is as follows. Catalyzes the NADPH-dependent rearrangement and reduction of 1-deoxy-D-xylulose-5-phosphate (DXP) to 2-C-methyl-D-erythritol 4-phosphate (MEP). The protein is 1-deoxy-D-xylulose 5-phosphate reductoisomerase of Clostridium botulinum (strain Langeland / NCTC 10281 / Type F).